Reading from the N-terminus, the 461-residue chain is Porin AaxA (461 aa).

An N-terminal signal peptide occupies residues 1 to 22; sequence MSFRSVLLTALLSLSFTTTMQA.

The protein belongs to the OprB family.

Its subcellular location is the cell outer membrane. Its function is as follows. Facilitates L-arginine uptake, as part of the AaxABC system. The arginine uptake by the bacterium in the macrophage may be a virulence factor against the host innate immune response. The sequence is that of Porin AaxA (aaxA) from Chlamydia trachomatis serovar A (strain ATCC VR-571B / DSM 19440 / HAR-13).